Consider the following 264-residue polypeptide: MSIRLQEAGLRHGQVQALNNVDLQIGKGERVAIIGPSGAGKSSLLHLMATAVRPSAGQLDLLGEQPWLLTSGARQRLRARVGLVHQAPPLPPRQRVVTAVLAGRLGQWGTLRGLLNLIHPSDVPGAREVLAELGMVDKLFVQCGQLSGGQLQRVGIARALYQQPEVLLTDEPVSAMDPVLADHSLALLNRHAQAHGVTLVASLHAVELALAHFPRIIGIRAGEVAFDCPAEAVTPTMLDALYANEQLGSPVVPTATVLVQIPRC.

The ABC transporter domain maps to 3–246 (IRLQEAGLRH…MLDALYANEQ (244 aa)). An ATP-binding site is contributed by 35-42 (GPSGAGKS).

It belongs to the ABC transporter superfamily. Phosphonates importer (TC 3.A.1.9.1) family. The complex is composed of two ATP-binding proteins (PhnC), two transmembrane proteins (PhnE) and a solute-binding protein (PhnD).

It localises to the cell inner membrane. The enzyme catalyses phosphonate(out) + ATP + H2O = phosphonate(in) + ADP + phosphate + H(+). In terms of biological role, part of the ABC transporter complex PhnCDE involved in phosphonates import. Responsible for energy coupling to the transport system. The sequence is that of Phosphonates import ATP-binding protein PhnC from Pseudomonas entomophila (strain L48).